Reading from the N-terminus, the 520-residue chain is Dihydropyrimidinase 2 (520 aa).

Zn(2+) contacts are provided by His-59, His-61, and Lys-152. The residue at position 152 (Lys-152) is an N6-carboxylysine. Tyr-157 is a substrate binding site. 2 residues coordinate Zn(2+): His-185 and His-241. Ser-291 provides a ligand contact to substrate. Residue Asp-319 coordinates Zn(2+). A substrate-binding site is contributed by Asn-340.

It belongs to the metallo-dependent hydrolases superfamily. Hydantoinase/dihydropyrimidinase family. Homotetramer. Zn(2+) is required as a cofactor. Post-translationally, carboxylation allows a single lysine to coordinate two zinc ions. As to expression, body wall muscles.

The catalysed reaction is 5,6-dihydrouracil + H2O = 3-(carbamoylamino)propanoate + H(+). The protein is Dihydropyrimidinase 2 (dhp-2) of Caenorhabditis elegans.